Reading from the N-terminus, the 80-residue chain is Serine palmitoyltransferase small subunit A-A (80 aa).

At 1–21 (MKVLCEDVNGPRSSLGRAWSH) the chain is on the cytoplasmic side. Residues 22–38 (MSWLYYQYLLVTALYML) traverse the membrane as a helical segment. Topologically, residues 39 to 43 (EPWER) are lumenal. Residues 44 to 66 (TVFNSMLVSIVGMALYTGYIFMP) traverse the membrane as a helical segment. The Cytoplasmic portion of the chain corresponds to 67-80 (QHILAILHYFEIVQ).

This sequence belongs to the SPTSS family. SPTSSA subfamily. As to quaternary structure, component of the serine palmitoyltransferase (SPT) complex, which is composed of SPTLC1, SPTLC2 or SPTLC3 and SPTSSA or SPTSSB. The heterodimer consisting of SPTLC1 and SPTLC2/SPTLC3 forms the catalytic core of the enzyme, while SPTSSA or SPTSSB subunits determine substrate specificity. SPT also interacts with ORMDL proteins, especially ORMDL3, which negatively regulate SPT activity in the presence of ceramides.

The protein resides in the endoplasmic reticulum membrane. The protein operates within lipid metabolism; sphingolipid metabolism. Functionally, component of the serine palmitoyltransferase multisubunit enzyme (SPT) that catalyzes the initial and rate-limiting step in sphingolipid biosynthesis by condensing L-serine and activated acyl-CoA (most commonly palmitoyl-CoA) to form long-chain bases. The SPT complex is composed of SPTLC1, SPTLC2 or SPTLC3 and SPTSSA or SPTSSB. Within this complex, the heterodimer consisting of SPTLC1 and SPTLC2/SPTLC3 forms the catalytic core. Within the SPT complex, SPTSSA stimulates the catalytic activity and plays a role in substrate specificity, which depends upon the overall complex composition. The SPTLC1-SPTLC2-SPTSSA complex shows a strong preference for C16-CoA substrate, while the SPTLC1-SPTLC3-SPTSSA isozyme uses both C14-CoA and C16-CoA as substrates, with a slight preference for C14-CoA. Independently of its action as a SPT component, may be involved in MBOAT7 localization to mitochondria-associated membranes, a membrane bridge between the endoplasmic reticulum and mitochondria, may hence affect MBOAT7-catalyzed incorporation of arachidonic acid into phosphatidylinositol. This is Serine palmitoyltransferase small subunit A-A (sptssa-a) from Xenopus laevis (African clawed frog).